Here is a 353-residue protein sequence, read N- to C-terminus: Cyclic GMP-AMP synthase-like receptor (353 aa).

Residues serine 60 and 72-74 each bind ATP; that span reads EYD. Mg(2+) contacts are provided by glutamate 72, aspartate 74, and aspartate 183. Aspartate 183 provides a ligand contact to GTP. Lysine 245 provides a ligand contact to ATP. Mn(2+) contacts are provided by leucine 269 and glutamate 270.

It belongs to the mab-21 family. Mg(2+) is required as a cofactor. Mn(2+) serves as cofactor.

It catalyses the reaction GTP + ATP = 2',3'-cGAMP + 2 diphosphate. It carries out the reaction GTP + ATP = pppGp(2'-5')A + diphosphate. The catalysed reaction is pppGp(2'-5')A = 2',3'-cGAMP + diphosphate. Its function is as follows. Nucleotidyltransferase that catalyzes the formation of cyclic GMP-AMP (2',3'-cGAMP) from ATP and GTP and plays a key role in innate immunity. Acts as a key sensor of double-stranded RNA (dsRNA), the presence of dsRNA in the cytoplasm being a danger signal that triggers the immune responses. Directly binds dsRNA, activating the nucleotidyltransferase activity, leading to synthesis of 2',3'-cGAMP, a second messenger that binds to and activates Sting, thereby triggering the immune response via activation of the NF-kappa-B transcription factor. This is Cyclic GMP-AMP synthase-like receptor from Nicrophorus vespilloides (Boreal carrion beetle).